A 245-amino-acid polypeptide reads, in one-letter code: 1-(5-phosphoribosyl)-5-[(5-phosphoribosylamino)methylideneamino] imidazole-4-carboxamide isomerase (245 aa).

The active-site Proton acceptor is aspartate 7. The active-site Proton donor is aspartate 129.

It belongs to the HisA/HisF family.

It is found in the cytoplasm. It catalyses the reaction 1-(5-phospho-beta-D-ribosyl)-5-[(5-phospho-beta-D-ribosylamino)methylideneamino]imidazole-4-carboxamide = 5-[(5-phospho-1-deoxy-D-ribulos-1-ylimino)methylamino]-1-(5-phospho-beta-D-ribosyl)imidazole-4-carboxamide. It participates in amino-acid biosynthesis; L-histidine biosynthesis; L-histidine from 5-phospho-alpha-D-ribose 1-diphosphate: step 4/9. In Aliivibrio salmonicida (strain LFI1238) (Vibrio salmonicida (strain LFI1238)), this protein is 1-(5-phosphoribosyl)-5-[(5-phosphoribosylamino)methylideneamino] imidazole-4-carboxamide isomerase.